The chain runs to 207 residues: Large ribosomal subunit protein uL4 (207 aa).

Positions 44-78 (QRQGTHDVKNRSEVRGGGRKPWRQKGTGRARQGSI) are disordered. The span at 47–59 (GTHDVKNRSEVRG) shows a compositional bias: basic and acidic residues. Positions 60-71 (GGRKPWRQKGTG) are enriched in basic residues.

It belongs to the universal ribosomal protein uL4 family. In terms of assembly, part of the 50S ribosomal subunit.

One of the primary rRNA binding proteins, this protein initially binds near the 5'-end of the 23S rRNA. It is important during the early stages of 50S assembly. It makes multiple contacts with different domains of the 23S rRNA in the assembled 50S subunit and ribosome. In terms of biological role, forms part of the polypeptide exit tunnel. In Brevibacillus brevis (strain 47 / JCM 6285 / NBRC 100599), this protein is Large ribosomal subunit protein uL4.